The sequence spans 316 residues: MASTSRLDALPRVTCPNHPDAILVEDYRAGDMICPECGLVVGDRVIDVGSEWRTFSNDKATKDPSRVGDSQNPLLSDGDLSTMIGKGTGAASFDEFGNSKYQNRRTMSSSDRAMMNAFKEITTMADRINLPRNIVDRTNNLFKQVYEQKSLKGRANDAIASACLYIACRQEGVPRTFKEICAVSRISKKEIGRCFKLILKALETSVDLITTGDFMSRFCSNLCLPKQVQMAATHIARKAVELDLVPGRSPISVAAAAIYMASQASAEKRTQKEIGDIAGVADVTIRQSYRLIYPRAPDLFPSDFKFDTPVDKLPQL.

The TFIIB-type zinc finger occupies 11 to 42; sequence PRVTCPNHPDAILVEDYRAGDMICPECGLVVG. Residues Cys-15, His-18, Cys-34, and Cys-37 each contribute to the Zn(2+) site. 3 positions are modified to phosphoserine: Ser-70, Ser-76, and Ser-92. 2 repeat units span residues 124 to 200 and 218 to 294. DNA contacts are provided by Lys-152, Arg-154, Lys-189, and Lys-196. Residues 189–193 are core promoter DNA-binding; it reads KEIGR. Lys-238 carries the N6-acetyllysine; by autocatalysis modification. The necessary for TATA box-bound TBP complex formation stretch occupies residues 244–316; it reads LVPGRSPISV…DTPVDKLPQL (73 aa). Residue Arg-248 coordinates DNA. The tract at residues 249–252 is core promoter DNA-binding; the sequence is SPIS. The DNA site is built by Lys-272, Ala-281, Thr-284, Arg-286, and Arg-290. Positions 283 to 286 are core promoter DNA-binding; sequence VTIR.

The protein belongs to the TFIIB family. As to quaternary structure, found in a ternary complex with TATA box-bound TBP. Part of a TFIID-containing RNA polymerase II pre-initiation complex (PIC) that is composed of TBP and at least GTF2A1, GTF2A2, GTF2E1, GTF2E2, GTF2F1, GTF2H2, GTF2H3, GTF2H4, GTF2H5, GTF2B, TCEA1, ERCC2, ERCC3, TAF1, TAF2, TAF3, TAF4, TAF5, TAF6, TAF7, TAF8, TAF9, TAF10, TAF11, TAF12 and TAF13. Associates with TFIID-TFIIA (DA complex) to form TFIID-TFIIA-TFIIB (DAB complex), which is then recognized by RNA polymerase II (Pol II). Found in a RNA polymerase II initiation complex. Interacts (via C-terminus) with TBP; this interaction with TATA box-bound TBP guides Pol II into the PIC. Interacts (via N-terminus) with Pol II. Interacts (via C-terminus) with SSU72; this interaction is inhibited by SYMPK. Interacts with NR2F1; this interaction is direct. Interacts with PGR. Interacts with ESR1. Interacts with GTF2F1 (via C-terminus and preferentially via acetylated form); this interaction prevents binding of GTF2B to GTF2F2. Interacts with GTF2F2 (via N-terminus); this interaction is inhibited in presence of GTF2F1. Interacts with the transcription elongation factor TCEA2. Interacts with HSF1 (via transactivation domain). Interacts with GPBP1. Acetylated. Autoacetylated; autoacetylation at Lys-238 stimulates transcription activation.

It localises to the nucleus. The protein resides in the chromosome. It catalyses the reaction L-lysyl-[protein] + acetyl-CoA = N(6)-acetyl-L-lysyl-[protein] + CoA + H(+). General transcription factor that plays a role in transcription initiation by RNA polymerase II (Pol II). Involved in the pre-initiation complex (PIC) formation and Pol II recruitment at promoter DNA. Together with the TATA box-bound TBP forms the core initiation complex and provides a bridge between TBP and the Pol II-TFIIF complex. Released from the PIC early following the onset of transcription during the initiation and elongation transition and reassociates with TBP during the next transcription cycle. Associates with chromatin to core promoter-specific regions. Binds to two distinct DNA core promoter consensus sequence elements in a TBP-independent manner; these IIB-recognition elements (BREs) are localized immediately upstream (BREu), 5'-[GC][GC][GA]CGCC-3', and downstream (BREd), 5'-[GA]T[TGA][TG][GT][TG][TG]-3', of the TATA box element. Modulates transcription start site selection. Also exhibits autoacetyltransferase activity that contributes to the activated transcription. The chain is Transcription initiation factor IIB from Mus musculus (Mouse).